The sequence spans 234 residues: Ribosomal RNA small subunit methyltransferase G (234 aa).

Residues glycine 96, leucine 101, 119–121 (DAT), 147–148 (VE), and arginine 161 each bind S-adenosyl-L-methionine.

This sequence belongs to the methyltransferase superfamily. RNA methyltransferase RsmG family.

The protein localises to the cytoplasm. Specifically methylates the N7 position of a guanine in 16S rRNA. This chain is Ribosomal RNA small subunit methyltransferase G, found in Chlorobium chlorochromatii (strain CaD3).